Consider the following 180-residue polypeptide: Large ribosomal subunit protein uL5 (180 aa).

This sequence belongs to the universal ribosomal protein uL5 family. As to quaternary structure, part of the 50S ribosomal subunit; part of the 5S rRNA/L5/L18/L25 subcomplex. Contacts the 5S rRNA and the P site tRNA. Forms a bridge to the 30S subunit in the 70S ribosome.

In terms of biological role, this is one of the proteins that bind and probably mediate the attachment of the 5S RNA into the large ribosomal subunit, where it forms part of the central protuberance. In the 70S ribosome it contacts protein S13 of the 30S subunit (bridge B1b), connecting the 2 subunits; this bridge is implicated in subunit movement. Contacts the P site tRNA; the 5S rRNA and some of its associated proteins might help stabilize positioning of ribosome-bound tRNAs. In Lactobacillus helveticus (strain DPC 4571), this protein is Large ribosomal subunit protein uL5.